The primary structure comprises 1470 residues: Transient receptor potential cation channel subfamily M member 2 (1470 aa).

At 1–725 the chain is on the cytoplasmic side; the sequence is MDEAALEPTL…GELSVDNPHW (725 aa). ADP-D-ribose is bound by residues tyrosine 267, arginine 274, 305–308, and arginine 330; that span reads GPGT. The stretch at 726–738 is an intramembrane region; that stretch reads KVLLCMIFFPLIY. Topologically, residues 739–808 are cytoplasmic; it reads TGFLTFRRDE…MSFLKSPQVK (70 aa). A helical membrane pass occupies residues 809-829; sequence FYWNIASYFGFLWLFAVVLMI. Residues 830 to 836 are Extracellular-facing; it reads DFQTSPS. A helical transmembrane segment spans residues 837-857; it reads WRELLLYVWLTSLVCEEIRQL. Residues glutamate 853 and glutamine 856 each coordinate Ca(2+). The Cytoplasmic segment spans residues 858–876; that stretch reads YHDFDGSGFRRKAKMYIKD. Residues 877 to 897 traverse the membrane as a helical segment; it reads LWNILDVLSIVLFIAGLICRL. Position 879 (asparagine 879) interacts with Ca(2+). The Extracellular segment spans residues 898–905; the sequence is QASDTVFY. A helical transmembrane segment spans residues 906 to 926; that stretch reads IGKVILCIDFIIFCLRLMAIF. At 927–941 the chain is on the cytoplasmic side; sequence SISRTLGPKIIIVRR. Residues 942 to 968 traverse the membrane as a helical segment; that stretch reads MMLDLFFFMFLLSIWVVAYGVAKQGIL. Residues 969–977 are Extracellular-facing; it reads IENEERLNW. An intramembrane region (pore-forming) is located at residues 978-1002; it reads IIRGAVYEPYITIFGNFPTNIDNTL. Residues 991–993 carry the Selectivity filter motif; sequence FGN. Topologically, residues 1003 to 1034 are extracellular; it reads FDISSCSVNASDPLKPKCPMLNADNTPVFPEW. A disulfide bridge links cysteine 1008 with cysteine 1020. The N-linked (GlcNAc...) asparagine glycan is linked to asparagine 1011. The chain crosses the membrane as a helical span at residues 1035-1059; it reads LTIMMLCVYLLFANILLLNLLIAIF. Topologically, residues 1060–1087 are cytoplasmic; it reads NYTFQEVQDNTDTIWKFQRYELIKEYHS. Residue glutamate 1084 coordinates Ca(2+). Residues 1088–1105 lie within the membrane without spanning it; it reads RPALPPPFILLSHLILFI. Over 1106–1470 the chain is Cytoplasmic; sequence RGVFLRDLPQ…QIAHHHNTYF (365 aa). A divergent Nudix hydrolase-like domain region spans residues 1157-1470; the sequence is HRIHDTAEKV…QIAHHHNTYF (314 aa). 2 disordered regions span residues 1215-1256 and 1281-1314; these read KSKV…LQYP and PPVY…GKGA. A compositionally biased stretch (acidic residues) spans 1231 to 1244; sequence DDGDSSGQETDDEE. The segment covering 1283–1295 has biased composition (polar residues); sequence VYNQQDSSESDTS. ADP-D-ribose contacts are provided by aspartate 1398 and arginine 1400.

Belongs to the transient receptor (TC 1.A.4) family. LTrpC subfamily. TRPM2 sub-subfamily. As to quaternary structure, homotetramer.

The protein localises to the cell membrane. The catalysed reaction is Ca(2+)(in) = Ca(2+)(out). It catalyses the reaction Na(+)(in) = Na(+)(out). Activated by intracellular ADP-ribose. Ca(2+) and PI(4,5)P2 are required for channel opening by ADP-ribose. Nonselective, voltage-independent cation channel that mediates Ca(2+) influx, leading to increased cytoplasmic Ca(2+) levels. Functions as a ligand-gated ion channel, gated by intracellular adenosine diphosphate ribose (ADP-ribose), Ca(2+), warm temperature, and oxidative stress. Binding of ADP-ribose to the cytoplasmic N-terminal region causes a conformation change; the channel is primed but still requires Ca(2+) binding to trigger channel opening. The sequence is that of Transient receptor potential cation channel subfamily M member 2 from Danio rerio (Zebrafish).